The primary structure comprises 395 residues: Succinyl-diaminopimelate desuccinylase (395 aa).

Residue histidine 74 coordinates Zn(2+). The active site involves aspartate 76. Aspartate 107 contacts Zn(2+). Glutamate 141 serves as the catalytic Proton acceptor. Residues glutamate 142, glutamate 170, and histidine 368 each contribute to the Zn(2+) site.

The protein belongs to the peptidase M20A family. DapE subfamily. Homodimer. Zn(2+) serves as cofactor. It depends on Co(2+) as a cofactor.

The catalysed reaction is N-succinyl-(2S,6S)-2,6-diaminopimelate + H2O = (2S,6S)-2,6-diaminopimelate + succinate. It participates in amino-acid biosynthesis; L-lysine biosynthesis via DAP pathway; LL-2,6-diaminopimelate from (S)-tetrahydrodipicolinate (succinylase route): step 3/3. Functionally, catalyzes the hydrolysis of N-succinyl-L,L-diaminopimelic acid (SDAP), forming succinate and LL-2,6-diaminopimelate (DAP), an intermediate involved in the bacterial biosynthesis of lysine and meso-diaminopimelic acid, an essential component of bacterial cell walls. The chain is Succinyl-diaminopimelate desuccinylase from Brucella canis (strain ATCC 23365 / NCTC 10854 / RM-666).